The chain runs to 391 residues: Enoyl-CoA delta isomerase 2 (391 aa).

The transit peptide at 1–36 (MAAVTWSRARCWCPSLLQVLRLPVTKLHLGRPAMRA) directs the protein to the mitochondrion. The ACB domain maps to 37–122 (TQQDFENAMN…VSSLSSSSEA (86 aa)). Lys-49 is modified (N6-acetyllysine; alternate). An N6-succinyllysine; alternate modification is found at Lys-49. Lys-53 is modified (N6-succinyllysine). Position 60 is an N6-acetyllysine; alternate (Lys-60). Lys-60 bears the N6-succinyllysine; alternate mark. Residue 64–68 (YALYK) participates in an acyl-CoA binding. An N6-succinyllysine mark is found at Lys-68, Lys-79, and Lys-88. An N6-acetyllysine; alternate modification is found at Lys-90. Lys-90 carries the post-translational modification N6-succinyllysine; alternate. An acyl-CoA is bound at residue Lys-90. Phosphoserine is present on Ser-99. Tyr-109 lines the an acyl-CoA pocket. Ser-117 is subject to Phosphoserine. N6-succinyllysine occurs at positions 127 and 159. The tract at residues 149 to 319 (TKITFNRPSK…AQGLVTEVFP (171 aa)) is ECH-like. 196–200 (SGNDL) contacts substrate. N6-succinyllysine is present on Lys-286. A Microbody targeting signal motif is present at residues 389 to 391 (PKL).

This sequence in the C-terminal section; belongs to the enoyl-CoA hydratase/isomerase family. Liver (at protein level).

It is found in the peroxisome matrix. The protein localises to the mitochondrion. It catalyses the reaction a (3Z)-enoyl-CoA = a 4-saturated (2E)-enoyl-CoA. The enzyme catalyses a (3E)-enoyl-CoA = a 4-saturated (2E)-enoyl-CoA. The catalysed reaction is (2E)-tetradecenoyl-CoA = (3Z)-tetradecenoyl-CoA. It carries out the reaction (3E)-tetradecenoyl-CoA = (2E)-tetradecenoyl-CoA. It catalyses the reaction (3E)-octenoyl-CoA = (2E)-octenoyl-CoA. The enzyme catalyses (3Z)-octenoyl-CoA = (2E)-octenoyl-CoA. The catalysed reaction is (3E)-nonenoyl-CoA = (2E)-nonenoyl-CoA. Its pathway is lipid metabolism; fatty acid beta-oxidation. Its function is as follows. Able to isomerize both 3-cis and 3-trans double bonds into the 2-trans form in a range of enoyl-CoA species. Has a preference for 3-trans substrates. This Rattus norvegicus (Rat) protein is Enoyl-CoA delta isomerase 2.